The chain runs to 429 residues: Adenylosuccinate synthetase (429 aa).

Residues 12–18 (GDEGKGK) and 40–42 (GHT) contribute to the GTP site. The Proton acceptor role is filled by Asp13. The Mg(2+) site is built by Asp13 and Gly40. IMP-binding positions include 13–16 (DEGK), 38–41 (NAGH), Thr129, Arg143, Gln223, Thr238, and Arg302. The active-site Proton donor is His41. Substrate is bound at residue 298 to 304 (VVTGRKR). GTP-binding positions include Arg304, 330 to 332 (KLD), and 412 to 414 (STS).

The protein belongs to the adenylosuccinate synthetase family. As to quaternary structure, homodimer. Mg(2+) serves as cofactor.

It localises to the cytoplasm. It carries out the reaction IMP + L-aspartate + GTP = N(6)-(1,2-dicarboxyethyl)-AMP + GDP + phosphate + 2 H(+). It functions in the pathway purine metabolism; AMP biosynthesis via de novo pathway; AMP from IMP: step 1/2. Functionally, plays an important role in the de novo pathway of purine nucleotide biosynthesis. Catalyzes the first committed step in the biosynthesis of AMP from IMP. The chain is Adenylosuccinate synthetase from Bartonella tribocorum (strain CIP 105476 / IBS 506).